We begin with the raw amino-acid sequence, 150 residues long: MAYSGKWVPKNISKYRGDPKKITYRSNWEKFFFEWLDKNPEIIAWGSETAVIPYFCNAEGKKRRYFMDIWMKDSSGQEFFIEIKPKKETQPPVKPAHLTTAAKKRFMNEIYTWSVNTDKWKAAQSLAEKRGIKFRILTEDGLRALGFKGA.

Catalysis depends on residues Glu-29, Asp-68, and Lys-84.

It belongs to the Caudovirales head completion nuclease family.

During phage morphogenesis, plays an essential role in the head-tail joining step. The associated nuclease activity is essential for morphogenesis, possibly by cleaving packaged DNA to enable the joining of heads to tails. Displays both exo- and endonuclease activity. This is Head completion nuclease (50) from Enterobacteria phage T4 (Bacteriophage T4).